The primary structure comprises 338 residues: 4-hydroxy-3-methylbut-2-enyl diphosphate reductase (338 aa).

Residue C21 coordinates [4Fe-4S] cluster. H50 and H83 together coordinate (2E)-4-hydroxy-3-methylbut-2-enyl diphosphate. Residues H50 and H83 each coordinate dimethylallyl diphosphate. H50 and H83 together coordinate isopentenyl diphosphate. C105 contributes to the [4Fe-4S] cluster binding site. Position 133 (H133) interacts with (2E)-4-hydroxy-3-methylbut-2-enyl diphosphate. Residue H133 participates in dimethylallyl diphosphate binding. H133 serves as a coordination point for isopentenyl diphosphate. The Proton donor role is filled by E135. Residue T173 coordinates (2E)-4-hydroxy-3-methylbut-2-enyl diphosphate. C203 provides a ligand contact to [4Fe-4S] cluster. Positions 231, 232, 233, and 276 each coordinate (2E)-4-hydroxy-3-methylbut-2-enyl diphosphate. S231, S232, N233, and S276 together coordinate dimethylallyl diphosphate. Positions 231, 232, 233, and 276 each coordinate isopentenyl diphosphate.

This sequence belongs to the IspH family. [4Fe-4S] cluster is required as a cofactor.

The enzyme catalyses isopentenyl diphosphate + 2 oxidized [2Fe-2S]-[ferredoxin] + H2O = (2E)-4-hydroxy-3-methylbut-2-enyl diphosphate + 2 reduced [2Fe-2S]-[ferredoxin] + 2 H(+). It carries out the reaction dimethylallyl diphosphate + 2 oxidized [2Fe-2S]-[ferredoxin] + H2O = (2E)-4-hydroxy-3-methylbut-2-enyl diphosphate + 2 reduced [2Fe-2S]-[ferredoxin] + 2 H(+). The protein operates within isoprenoid biosynthesis; dimethylallyl diphosphate biosynthesis; dimethylallyl diphosphate from (2E)-4-hydroxy-3-methylbutenyl diphosphate: step 1/1. Its pathway is isoprenoid biosynthesis; isopentenyl diphosphate biosynthesis via DXP pathway; isopentenyl diphosphate from 1-deoxy-D-xylulose 5-phosphate: step 6/6. Catalyzes the conversion of 1-hydroxy-2-methyl-2-(E)-butenyl 4-diphosphate (HMBPP) into a mixture of isopentenyl diphosphate (IPP) and dimethylallyl diphosphate (DMAPP). Acts in the terminal step of the DOXP/MEP pathway for isoprenoid precursor biosynthesis. In Streptomyces avermitilis (strain ATCC 31267 / DSM 46492 / JCM 5070 / NBRC 14893 / NCIMB 12804 / NRRL 8165 / MA-4680), this protein is 4-hydroxy-3-methylbut-2-enyl diphosphate reductase.